We begin with the raw amino-acid sequence, 777 residues long: Shutoff protein (777 aa).

Disordered regions lie at residues 1-55 (MEED…SVPV) and 261-283 (PLDS…DDDL). Over residues 9-20 (QPDSETLTSPTS) the composition is skewed to polar residues. The segment at 250–314 (VMDHLLIKRV…VILVTVELEC (65 aa)) is binding to host EIF4G. The 119-residue stretch at 317-435 (RFFANPQTLR…ELWTAFSERT (119 aa)) folds into the RRM domain. A phosphotyrosine; by host mark is found at Tyr-334 and Tyr-649. Residues 652-777 (PQTGEELNTP…AAARLVESQP (126 aa)) form a disordered region. The segment covering 656-665 (EELNTPSPSA) has biased composition (polar residues). Residues 728 to 738 (GAGGQTPQGRG) show a composition bias toward gly residues. The span at 753–763 (TRSEPASDGES) shows a compositional bias: basic and acidic residues.

The protein belongs to the adenoviridae shutoff protein family. As to quaternary structure, monomer. Interacts with hexon protein; this interaction allows chaperoning and trimerization of hexon proteins. Interacts (via N-terminus) with host initiation factor EIF4G (via C-terminus). Interacts (via RRM domain) with viral mRNAs that contain the tripartite leader; this interaction allows ribosome shunting and expression of viral late mRNAs. Post-translationally, might be cleaved by the viral protease. In terms of processing, phosphorylated. Tyrosine phosphorylation enhances preferential binding to tripartite leader mRNAs and allows ribosome shunting. Methylated. Asymmetric dimethylation by host PRMT1 of the Arg/Gly-rich region may regulate shutoff protein binding to hexon and promote the capsid assembly in the nucleus.

The protein localises to the host cytoplasm. Its function is as follows. Protein that inhibits host translation while promoting late viral translation by ribosome shunting. Blocks host cap-dependent translation by binding to eIF4G, displacing MKNK1 from cap initiation complexes and preventing EIF4E phosphorylation. Binds to the tripartite leader sequence of viral late mRNAs and recruits host eIF4G, PABPC1/poly-A binding protein and 40S ribosomes subunits on viral mRNAs, allowing ribosome shunting and efficient translation of late viral mRNAs even though conventional translation via ribosome scanning from the cap has been shut off in the host cell. During assembly, acts as a chaperone protein that helps hexon proteins assembly into trimers. The chain is Shutoff protein from Homo sapiens (Human).